Here is a 201-residue protein sequence, read N- to C-terminus: Pyridoxine/pyridoxamine 5'-phosphate oxidase (201 aa).

Residues 49-54, 64-65, Lys71, and Gln93 each bind FMN; these read RMVLLK and YT. Lys54 is a binding site for substrate. Residues Tyr111, Arg115, and Ser119 each contribute to the substrate site. FMN contacts are provided by residues 128–129 and Trp172; that span reads QS. 178–180 contacts substrate; the sequence is RLH. Arg182 lines the FMN pocket.

Belongs to the pyridoxamine 5'-phosphate oxidase family. In terms of assembly, homodimer. It depends on FMN as a cofactor.

It catalyses the reaction pyridoxamine 5'-phosphate + O2 + H2O = pyridoxal 5'-phosphate + H2O2 + NH4(+). It carries out the reaction pyridoxine 5'-phosphate + O2 = pyridoxal 5'-phosphate + H2O2. Its pathway is cofactor metabolism; pyridoxal 5'-phosphate salvage; pyridoxal 5'-phosphate from pyridoxamine 5'-phosphate: step 1/1. The protein operates within cofactor metabolism; pyridoxal 5'-phosphate salvage; pyridoxal 5'-phosphate from pyridoxine 5'-phosphate: step 1/1. Its function is as follows. Catalyzes the oxidation of either pyridoxine 5'-phosphate (PNP) or pyridoxamine 5'-phosphate (PMP) into pyridoxal 5'-phosphate (PLP). This Roseobacter denitrificans (strain ATCC 33942 / OCh 114) (Erythrobacter sp. (strain OCh 114)) protein is Pyridoxine/pyridoxamine 5'-phosphate oxidase.